The following is a 910-amino-acid chain: Schlafen family member 8 (910 aa).

The interval 1 to 354 is n'-domain region; sequence METHPSLAVK…WVRMMVDFGP (354 aa). Active-site residues include E205 and E210. Positions 280, 282, and 319 each coordinate Zn(2+). 599-606 lines the ATP pocket; the sequence is GLPGSGKT.

The protein belongs to the Schlafen family. Subgroup III subfamily. Mg(2+) serves as cofactor. As to expression, in T-cells, expressed at relatively constant levels during development: expressed in immature CD3(-)CD4(-)CD8(-) T-cells (DN stage), in CD4(+)CD8(+) double-positive stage (DP) and mature CD4(+) or CD8(+) thymocytes. Expression is slightly reduced at the DP stage.

The protein resides in the cytoplasm. Functionally, endoribonuclease that cleaves tRNAs and rRNAs. Cleaves tRNAs 11 nucleotides from the 3'-terminus at the acceptor stem. May be involved in immune system via regulation of inflammation. The chain is Schlafen family member 8 from Mus musculus (Mouse).